The primary structure comprises 269 residues: Interleukin-1 beta (269 aa).

Residues 1 to 117 (MATVPELNCE…DDDDNLLVCD (117 aa)) constitute a propeptide that is removed on maturation.

Belongs to the IL-1 family. Monomer. Interacts with MEFV. Interacts with integrins ITGAV:ITGBV and ITGA5:ITGB1; integrin-binding is required for IL1B signaling. Interacts with cargo receptor TMED10; the interaction is direct and is required for the secretion of IL1B mature form. Interacts with HSP90AB1; the interaction facilitates cargo translocation into the ERGIC. Interacts with HSP90B1; the interaction facilitates cargo translocation into the ERGIC. As to expression, expressed in activated macrophages (at protein level).

It localises to the cytoplasm. It is found in the cytosol. The protein resides in the secreted. Its subcellular location is the lysosome. The protein localises to the extracellular exosome. Functionally, potent pro-inflammatory cytokine. Initially discovered as the major endogenous pyrogen, induces prostaglandin synthesis, neutrophil influx and activation, T-cell activation and cytokine production, B-cell activation and antibody production, and fibroblast proliferation and collagen production. Promotes Th17 differentiation of T-cells. Synergizes with IL12/interleukin-12 to induce IFNG synthesis from T-helper 1 (Th1) cells. Plays a role in angiogenesis by inducing VEGF production synergistically with TNF and IL6. Involved in transduction of inflammation downstream of pyroptosis: its mature form is specifically released in the extracellular milieu by passing through the gasdermin-D (GSDMD) pore. The sequence is that of Interleukin-1 beta (Il1b) from Mus musculus (Mouse).